Reading from the N-terminus, the 28-residue chain is 14-3-3-like protein 4 (28 aa).

Belongs to the 14-3-3 family.

The polypeptide is 14-3-3-like protein 4 (Pseudotsuga menziesii (Douglas-fir)).